A 330-amino-acid chain; its full sequence is Putative 4-hydroxythreonine-4-phosphate dehydrogenase (330 aa).

Residues His-169, His-213, and His-263 each contribute to the a divalent metal cation site.

Belongs to the PdxA family. As to quaternary structure, homodimer. It depends on Zn(2+) as a cofactor. Requires Mg(2+) as cofactor. Co(2+) serves as cofactor.

It is found in the cytoplasm. The enzyme catalyses 4-(phosphooxy)-L-threonine + NAD(+) = 3-amino-2-oxopropyl phosphate + CO2 + NADH. Its pathway is cofactor biosynthesis; pyridoxine 5'-phosphate biosynthesis; pyridoxine 5'-phosphate from D-erythrose 4-phosphate: step 4/5. Functionally, catalyzes the NAD(P)-dependent oxidation of 4-(phosphooxy)-L-threonine (HTP) into 2-amino-3-oxo-4-(phosphooxy)butyric acid which spontaneously decarboxylates to form 3-amino-2-oxopropyl phosphate (AHAP). In Novosphingobium aromaticivorans (Sphingomonas aromaticivorans), this protein is Putative 4-hydroxythreonine-4-phosphate dehydrogenase.